The following is a 487-amino-acid chain: Betaine aldehyde dehydrogenase (487 aa).

The K(+) site is built by isoleucine 27 and aspartate 93. 149-151 (GAW) contributes to the NAD(+) binding site. Lysine 161 (charge relay system) is an active-site residue. Residues 175-178 (KPSE) and 228-231 (SVPT) each bind NAD(+). Leucine 243 serves as a coordination point for K(+). Glutamate 249 acts as the Proton acceptor in catalysis. NAD(+)-binding residues include glycine 251, cysteine 283, and glutamate 384. Cysteine 283 serves as the catalytic Nucleophile. Cysteine 283 carries the cysteine sulfenic acid (-SOH) modification. K(+) contacts are provided by lysine 454 and glycine 457. Residue glutamate 461 is the Charge relay system of the active site.

The protein belongs to the aldehyde dehydrogenase family. As to quaternary structure, dimer of dimers. It depends on K(+) as a cofactor.

The enzyme catalyses betaine aldehyde + NAD(+) + H2O = glycine betaine + NADH + 2 H(+). It participates in amine and polyamine biosynthesis; betaine biosynthesis via choline pathway; betaine from betaine aldehyde: step 1/1. Involved in the biosynthesis of the osmoprotectant glycine betaine. Catalyzes the irreversible oxidation of betaine aldehyde to the corresponding acid. This is Betaine aldehyde dehydrogenase from Brucella melitensis biotype 2 (strain ATCC 23457).